Consider the following 74-residue polypeptide: Large ribosomal subunit protein uL29 (74 aa).

It belongs to the universal ribosomal protein uL29 family.

The protein is Large ribosomal subunit protein uL29 of Cyanothece sp. (strain PCC 7425 / ATCC 29141).